Here is a 352-residue protein sequence, read N- to C-terminus: Fe(3+) ions import ATP-binding protein FbpC (352 aa).

The ABC transporter domain occupies 5–239 (LHIGHLSKSF…PADLDAALFI (235 aa)). 37–44 (GASGCGKT) is a binding site for ATP.

Belongs to the ABC transporter superfamily. Fe(3+) ion importer (TC 3.A.1.10) family. As to quaternary structure, the complex is composed of two ATP-binding proteins (FbpC), two transmembrane proteins (FbpB) and a solute-binding protein (FbpA).

The protein resides in the cell inner membrane. It catalyses the reaction Fe(3+)(out) + ATP + H2O = Fe(3+)(in) + ADP + phosphate + H(+). Part of the ABC transporter complex FbpABC involved in Fe(3+) ions import. Responsible for energy coupling to the transport system. This is Fe(3+) ions import ATP-binding protein FbpC from Neisseria meningitidis serogroup A / serotype 4A (strain DSM 15465 / Z2491).